The chain runs to 382 residues: ATP phosphoribosyltransferase regulatory subunit (382 aa).

The protein belongs to the class-II aminoacyl-tRNA synthetase family. HisZ subfamily. Heteromultimer composed of HisG and HisZ subunits.

It localises to the cytoplasm. It functions in the pathway amino-acid biosynthesis; L-histidine biosynthesis; L-histidine from 5-phospho-alpha-D-ribose 1-diphosphate: step 1/9. Functionally, required for the first step of histidine biosynthesis. May allow the feedback regulation of ATP phosphoribosyltransferase activity by histidine. The polypeptide is ATP phosphoribosyltransferase regulatory subunit (Acidovorax ebreus (strain TPSY) (Diaphorobacter sp. (strain TPSY))).